Reading from the N-terminus, the 83-residue chain is UPF0248 protein TGAM_1209 (83 aa).

Belongs to the UPF0248 family.

The polypeptide is UPF0248 protein TGAM_1209 (Thermococcus gammatolerans (strain DSM 15229 / JCM 11827 / EJ3)).